A 183-amino-acid chain; its full sequence is Translation initiation factor IF-3 (183 aa).

It belongs to the IF-3 family. In terms of assembly, monomer.

The protein localises to the cytoplasm. Functionally, IF-3 binds to the 30S ribosomal subunit and shifts the equilibrium between 70S ribosomes and their 50S and 30S subunits in favor of the free subunits, thus enhancing the availability of 30S subunits on which protein synthesis initiation begins. The polypeptide is Translation initiation factor IF-3 (Yersinia enterocolitica serotype O:8 / biotype 1B (strain NCTC 13174 / 8081)).